The chain runs to 491 residues: CRM-domain containing factor CFM9, mitochondrial (491 aa).

Residues 1–25 (MNQVFKGWSRGMSTSRGRSMRSKVE) constitute a mitochondrion transit peptide. Positions 1 to 34 (MNQVFKGWSRGMSTSRGRSMRSKVESRMRKESGK) are disordered. Basic and acidic residues predominate over residues 22–34 (SKVESRMRKESGK). The region spanning 90-187 (ELFTSEQVQA…RNYRQPKNLI (98 aa)) is the CRM domain. A compositionally biased stretch (basic and acidic residues) spans 255 to 265 (PYVFHGDKQSE). 2 disordered regions span residues 255–287 (PYVF…DQEE) and 328–491 (RSRT…WDSD). Positions 277–287 (EPGDEDSDQEE) are enriched in acidic residues. Over residues 345–359 (RRNDRDTHSQRRPND) the composition is skewed to basic and acidic residues. Acidic residues predominate over residues 360–375 (SDDDDDDGELDSEDDE). Basic and acidic residues predominate over residues 392-416 (RPREDFKRRSPDPRPRPRAQVRSDD). Positions 453 to 478 (TVSASSSKQSRFRNNSSRDGINNSKS) are enriched in polar residues.

In terms of tissue distribution, highly expressed in roots and meristemic regions of young seedlings. Expressed at low levels in stems, trichomes and stigma.

Its subcellular location is the mitochondrion. Functionally, involved in the splicing of group II introns in mitochondria. Required for the splicing of mitochondrial introns found in nad1, nad2, nad4, nad5, nad7, rps3 and cox2 genes. Splicing of mitochondrial introns is crucial for mitochondrial biogenesis and function, plant growth and development, and plant response to abiotic stresses. The polypeptide is CRM-domain containing factor CFM9, mitochondrial (Arabidopsis thaliana (Mouse-ear cress)).